A 446-amino-acid chain; its full sequence is NADH-ubiquinone oxidoreductase chain 4 (446 aa).

13 helical membrane passes run Ile-4 to Val-24, Met-56 to Ser-76, Ile-93 to Tyr-113, Leu-114 to Pro-134, Ala-139 to Phe-159, Leu-182 to Leu-202, Ile-218 to Leu-238, Tyr-245 to Leu-265, Ala-272 to Met-292, Leu-297 to Leu-317, Met-330 to Leu-350, Ile-373 to Ala-393, and Leu-426 to Leu-446.

This sequence belongs to the complex I subunit 4 family.

It is found in the mitochondrion membrane. The enzyme catalyses a ubiquinone + NADH + 5 H(+)(in) = a ubiquinol + NAD(+) + 4 H(+)(out). Core subunit of the mitochondrial membrane respiratory chain NADH dehydrogenase (Complex I) that is believed to belong to the minimal assembly required for catalysis. Complex I functions in the transfer of electrons from NADH to the respiratory chain. The immediate electron acceptor for the enzyme is believed to be ubiquinone. In Drosophila melanogaster (Fruit fly), this protein is NADH-ubiquinone oxidoreductase chain 4 (mt:ND4).